Here is a 206-residue protein sequence, read N- to C-terminus: CBS domain-containing protein CBSX3, mitochondrial (206 aa).

The transit peptide at 1–39 directs the protein to the mitochondrion; that stretch reads MQGVIRSFVSGGNVVKGSVLQHLRVINPAIQPSVFCSRS. 2 CBS domains span residues 61-127 and 136-194; these read MKSK…GRSS and MTEE…HREE.

The protein resides in the mitochondrion. The sequence is that of CBS domain-containing protein CBSX3, mitochondrial (CBSX3) from Arabidopsis thaliana (Mouse-ear cress).